The primary structure comprises 217 residues: NADPH-dependent 3-demethoxyubiquinone 3-hydroxylase, mitochondrial (217 aa).

The transit peptide at 1 to 23 (MSAAGAIAAASVGRLRTGVRRPF) directs the protein to the mitochondrion. 2 consecutive repeat copies span residues 48–129 (AVDR…TALL) and 130–217 (GKEG…SERF). The segment at 48-217 (AVDRIIRVDH…SAAIYLSERF (170 aa)) is 2 X approximate tandem repeats. Arginine 51 contacts NADH. 6 residues coordinate Fe cation: glutamate 60, glutamate 90, histidine 93, glutamate 142, glutamate 178, and histidine 181. Tyrosine 212 and arginine 216 together coordinate NADH.

This sequence belongs to the COQ7 family. Component of a multi-subunit COQ enzyme complex. Interacts with COQ8B and COQ6. Interacts with COQ9. Fe cation is required as a cofactor. Highly expressed in tissues with high energy demand such as heart, muscle, liver, and kidney.

It is found in the mitochondrion inner membrane. It catalyses the reaction a 5-methoxy-2-methyl-3-(all-trans-polyprenyl)benzoquinone + NADH + O2 = a 3-demethylubiquinone + NAD(+) + H2O. Its pathway is cofactor biosynthesis; ubiquinone biosynthesis. Catalyzes the hydroxylation of the 5-methoxy-2-methyl-3-(all-trans-polyprenyl)benzoquinone at the C6 position and participates in the biosynthesis of ubiquinone. Catalyzes the reaction through a substrate-mediated reduction pathway, whereby NADH shuttles electrons to 5-methoxy-2-methyl-3-(all-trans-decaprenyl)benzoquinone, which then transfers the electrons to the two Fe(3+) centers. The binding of 5-methoxy-2-methyl-3-(all-trans-polyprenyl)benzoquinone (DMQn) mediates reduction of the diiron center by nicotinamide adenine dinucleotide (NADH) and initiates oxygen activation for subsequent DMQ hydroxylation. The physiological substrates are 5-methoxy-2-methyl-3-(all-trans-nonaprenyl)benzoquinone (DMQ(9)) and 5-methoxy-2-methyl-3-(all-trans-decaprenyl)benzoquinone (DMQ(10)), however in vitro the enzyme does not have any specificity concerning the length of the polyprenyl tail, and accepts tails of various lengths with similar efficiency. Also has a structural role in the COQ enzyme complex, stabilizing other COQ polypeptides. Involved in lifespan determination in a ubiquinone-independent manner. Plays a role in modulating mitochondrial stress responses, acting in the nucleus, perhaps via regulating gene expression, independent of its characterized mitochondrial function in ubiquinone biosynthesis. This is NADPH-dependent 3-demethoxyubiquinone 3-hydroxylase, mitochondrial from Mus musculus (Mouse).